Reading from the N-terminus, the 619-residue chain is DNA mismatch repair protein MutL (619 aa).

A disordered region spans residues 339 to 400 (AEKDDPPAPR…GGASWPHAQP (62 aa)).

The protein belongs to the DNA mismatch repair MutL/HexB family.

Functionally, this protein is involved in the repair of mismatches in DNA. It is required for dam-dependent methyl-directed DNA mismatch repair. May act as a 'molecular matchmaker', a protein that promotes the formation of a stable complex between two or more DNA-binding proteins in an ATP-dependent manner without itself being part of a final effector complex. The sequence is that of DNA mismatch repair protein MutL from Klebsiella pneumoniae subsp. pneumoniae (strain ATCC 700721 / MGH 78578).